Reading from the N-terminus, the 504-residue chain is L-carnitine/gamma-butyrobetaine antiporter (504 aa).

12 consecutive transmembrane segments (helical) span residues 10–30 (IEPKVFFPPLIIVGILCWLTV), 51–71 (WGWAFEWYMVVMLFGWFWLVF), 92–112 (IFMMFASCTSAAVLFWGSIEI), 143–163 (GPLPWATYSFLSVAFAYFFFV), 195–215 (FYLVALIFAMGTSLGLATPLV), 231–251 (LDAIIITCWIILNAICVACGL), 263–283 (SYLSFLMLGWVFIVSGASFIM), 316–336 (WTVFYWAWWVIYAIQMSIFLA), 347–367 (LCFGMVLGLTASTWILWTVLG), 398–418 (WAALPLSTATMWGFFILCFIA), 446–466 (LLVRIGWSILVGIIGIVLLAL), and 475–495 (AIIAGGCPLFFVNIMVTLSFI).

The protein belongs to the BCCT transporter (TC 2.A.15) family. CaiT subfamily. Homotrimer.

Its subcellular location is the cell inner membrane. It catalyses the reaction 4-(trimethylamino)butanoate(in) + (R)-carnitine(out) = 4-(trimethylamino)butanoate(out) + (R)-carnitine(in). It functions in the pathway amine and polyamine metabolism; carnitine metabolism. Functionally, catalyzes the exchange of L-carnitine for gamma-butyrobetaine. The sequence is that of L-carnitine/gamma-butyrobetaine antiporter from Escherichia coli (strain K12 / MC4100 / BW2952).